The primary structure comprises 353 residues: Methionine import ATP-binding protein MetN (353 aa).

The 241-residue stretch at 11–251 (ITFDRVEKSF…PEHPTTRSFL (241 aa)) folds into the ABC transporter domain. Position 48-55 (48-55 (GRSGAGKS)) interacts with ATP.

This sequence belongs to the ABC transporter superfamily. Methionine importer (TC 3.A.1.24) family. As to quaternary structure, the complex is composed of two ATP-binding proteins (MetN), two transmembrane proteins (MetI) and a solute-binding protein (MetQ).

The protein localises to the cell inner membrane. It carries out the reaction L-methionine(out) + ATP + H2O = L-methionine(in) + ADP + phosphate + H(+). The catalysed reaction is D-methionine(out) + ATP + H2O = D-methionine(in) + ADP + phosphate + H(+). In terms of biological role, part of the ABC transporter complex MetNIQ involved in methionine import. Responsible for energy coupling to the transport system. This chain is Methionine import ATP-binding protein MetN, found in Cereibacter sphaeroides (strain ATCC 17023 / DSM 158 / JCM 6121 / CCUG 31486 / LMG 2827 / NBRC 12203 / NCIMB 8253 / ATH 2.4.1.) (Rhodobacter sphaeroides).